The following is an 81-amino-acid chain: Large ribosomal subunit protein bL31B (81 aa).

It belongs to the bacterial ribosomal protein bL31 family. Type B subfamily. In terms of assembly, part of the 50S ribosomal subunit.

This chain is Large ribosomal subunit protein bL31B, found in Borrelia garinii subsp. bavariensis (strain ATCC BAA-2496 / DSM 23469 / PBi) (Borreliella bavariensis).